The chain runs to 122 residues: Large ribosomal subunit protein uL18 (122 aa).

The protein belongs to the universal ribosomal protein uL18 family. Part of the 50S ribosomal subunit; part of the 5S rRNA/L5/L18/L25 subcomplex. Contacts the 5S and 23S rRNAs.

This is one of the proteins that bind and probably mediate the attachment of the 5S RNA into the large ribosomal subunit, where it forms part of the central protuberance. In Mycobacterium leprae (strain TN), this protein is Large ribosomal subunit protein uL18.